Reading from the N-terminus, the 484-residue chain is Aspartyl/glutamyl-tRNA(Asn/Gln) amidotransferase subunit B (484 aa).

This sequence belongs to the GatB/GatE family. GatB subfamily. Heterotrimer of A, B and C subunits.

It carries out the reaction L-glutamyl-tRNA(Gln) + L-glutamine + ATP + H2O = L-glutaminyl-tRNA(Gln) + L-glutamate + ADP + phosphate + H(+). It catalyses the reaction L-aspartyl-tRNA(Asn) + L-glutamine + ATP + H2O = L-asparaginyl-tRNA(Asn) + L-glutamate + ADP + phosphate + 2 H(+). Functionally, allows the formation of correctly charged Asn-tRNA(Asn) or Gln-tRNA(Gln) through the transamidation of misacylated Asp-tRNA(Asn) or Glu-tRNA(Gln) in organisms which lack either or both of asparaginyl-tRNA or glutaminyl-tRNA synthetases. The reaction takes place in the presence of glutamine and ATP through an activated phospho-Asp-tRNA(Asn) or phospho-Glu-tRNA(Gln). In Bordetella pertussis (strain Tohama I / ATCC BAA-589 / NCTC 13251), this protein is Aspartyl/glutamyl-tRNA(Asn/Gln) amidotransferase subunit B.